Consider the following 335-residue polypeptide: Mycobacterial beta-ketoacyl-[acyl-carrier-protein] synthase III (335 aa).

Active-site residues include Cys-122 and His-258. The tract at residues 259-263 (QANSR) is ACP-binding. Residue Asn-289 is part of the active site.

This sequence belongs to the thiolase-like superfamily. FabH family. As to quaternary structure, homodimer.

It localises to the cytoplasm. The catalysed reaction is malonyl-[ACP] + dodecanoyl-CoA + H(+) = 3-oxotetradecanoyl-[ACP] + CO2 + CoA. It participates in lipid metabolism; fatty acid biosynthesis. Its pathway is lipid metabolism; mycolic acid biosynthesis. Catalyzes the condensation reaction of fatty acid synthesis by the addition to an acyl acceptor of two carbons from malonyl-ACP. Catalyzes the first condensation reaction which initiates fatty acid synthesis and may therefore play a role in governing the total rate of fatty acid production. Possesses both acetoacetyl-ACP synthase and acetyl transacylase activities. Its substrate specificity determines the biosynthesis of branched-chain and/or straight-chain of fatty acids. The sequence is that of Mycobacterial beta-ketoacyl-[acyl-carrier-protein] synthase III from Mycobacterium avium (strain 104).